The following is a 173-amino-acid chain: Transmembrane protein 240 (173 aa).

The next 2 membrane-spanning stretches (helical) occupy residues 5 to 25 and 90 to 110; these read ANTM…ACLM and LMLG…MDGV. Residue S169 is modified to Phosphoserine.

The protein localises to the synapse. It localises to the cell membrane. The sequence is that of Transmembrane protein 240 (Tmem240) from Mus musculus (Mouse).